Here is a 276-residue protein sequence, read N- to C-terminus: 28 kDa ribonucleoprotein, chloroplastic (276 aa).

The transit peptide at 1–57 directs the protein to the chloroplast; that stretch reads MATNGCLISLPPFFTTTKSISSYPFLSTQLKPISLSSSLPTLLSLNKRTTQFPTFVS. 2 RRM domains span residues 97–175 and 191–269; these read AKLF…KAAP and YRIY…AAEE.

Its subcellular location is the plastid. The protein resides in the chloroplast. Its function is as follows. Probably involved in the 3'-end processing of chloroplast mRNA's. This is 28 kDa ribonucleoprotein, chloroplastic from Nicotiana sylvestris (Wood tobacco).